Consider the following 903-residue polypeptide: Translation initiation factor IF-2 (903 aa).

Disordered stretches follow at residues 57-171 and 267-318; these read EKFK…QRRR and PTPQ…EAVT. The segment covering 69-163 has biased composition (basic and acidic residues); sequence KKEAKEPSEK…SEPQKPKESL (95 aa). The segment covering 267-278 has biased composition (low complexity); sequence PTPQPMQKTKQP. Positions 299-308 are enriched in basic residues; it reads RRARKKHKKP. Positions 402–569 constitute a tr-type G domain; it reads PRAPVITIMG…IVLLQAEILE (168 aa). Residues 411–418 form a G1 region; the sequence is GHVDHGKT. Residue 411-418 coordinates GTP; sequence GHVDHGKT. The G2 stretch occupies residues 436–440; it reads GITQH. The tract at residues 457–460 is G3; the sequence is DTPG. GTP-binding positions include 457–461 and 511–514; these read DTPGH and NKMD. The tract at residues 511 to 514 is G4; the sequence is NKMD. Residues 547-549 are G5; it reads SAK.

It belongs to the TRAFAC class translation factor GTPase superfamily. Classic translation factor GTPase family. IF-2 subfamily.

The protein localises to the cytoplasm. Its function is as follows. One of the essential components for the initiation of protein synthesis. Protects formylmethionyl-tRNA from spontaneous hydrolysis and promotes its binding to the 30S ribosomal subunits. Also involved in the hydrolysis of GTP during the formation of the 70S ribosomal complex. The sequence is that of Translation initiation factor IF-2 from Campylobacter curvus (strain 525.92).